Here is a 785-residue protein sequence, read N- to C-terminus: Neutral ceramidase (785 aa).

A signal peptide spans methionine 1–valine 35. Asparagine 31 carries N-linked (GlcNAc...) asparagine glycosylation. Residue serine 359 is the Nucleophile of the active site. Residues asparagine 377, asparagine 675, and asparagine 685 are each glycosylated (N-linked (GlcNAc...) asparagine).

This sequence belongs to the neutral ceramidase family. As to expression, expressed in seedlings, with higher levels in roots than in shoots.

The protein localises to the secreted. It is found in the endoplasmic reticulum. It localises to the golgi apparatus. The catalysed reaction is an N-acylsphing-4-enine + H2O = sphing-4-enine + a fatty acid. Enhanced activity in the presence of calcium, magnesium, manganese and zinc ions, but inhibited activity in the presence of iron ion. Its function is as follows. Hydrolyzes the sphingolipid ceramide into sphingosine and free fatty acid. Uses ceramide instead of phytoceramide as substrate. The chain is Neutral ceramidase from Oryza sativa subsp. japonica (Rice).